The following is a 232-amino-acid chain: Large ribosomal subunit protein uL1 (232 aa).

The protein belongs to the universal ribosomal protein uL1 family. As to quaternary structure, part of the 50S ribosomal subunit.

In terms of biological role, binds directly to 23S rRNA. The L1 stalk is quite mobile in the ribosome, and is involved in E site tRNA release. Protein L1 is also a translational repressor protein, it controls the translation of the L11 operon by binding to its mRNA. This is Large ribosomal subunit protein uL1 from Ruegeria sp. (strain TM1040) (Silicibacter sp.).